The chain runs to 290 residues: Diaminopimelate epimerase (290 aa).

Substrate-binding residues include N17, Q49, and N69. Residue C78 is the Proton donor of the active site. Substrate-binding positions include G79–N80, N166, N199, and E217–R218. C226 serves as the catalytic Proton acceptor. Position 227-228 (G227–S228) interacts with substrate.

The protein belongs to the diaminopimelate epimerase family. In terms of assembly, homodimer.

It is found in the cytoplasm. The catalysed reaction is (2S,6S)-2,6-diaminopimelate = meso-2,6-diaminopimelate. It functions in the pathway amino-acid biosynthesis; L-lysine biosynthesis via DAP pathway; DL-2,6-diaminopimelate from LL-2,6-diaminopimelate: step 1/1. Functionally, catalyzes the stereoinversion of LL-2,6-diaminopimelate (L,L-DAP) to meso-diaminopimelate (meso-DAP), a precursor of L-lysine and an essential component of the bacterial peptidoglycan. In Afipia carboxidovorans (strain ATCC 49405 / DSM 1227 / KCTC 32145 / OM5) (Oligotropha carboxidovorans), this protein is Diaminopimelate epimerase.